Here is a 541-residue protein sequence, read N- to C-terminus: uncharacterized protein (541 aa).

A signal peptide spans 1 to 22 (MQFKYGALIFSGFLGLSIVLAS). C23 carries N-palmitoyl cysteine lipidation. A lipid anchor (S-diacylglycerol cysteine) is attached at C23. 2 disordered regions span residues 446-468 (APGQ…NGNL) and 480-514 (KTKT…TENQ). Low complexity predominate over residues 448 to 460 (GQSSQKEGGQQQS). Basic and acidic residues predominate over residues 480–490 (KTKTEVKKTED).

The protein belongs to the MG185/MG260 family.

It is found in the cell membrane. This is an uncharacterized protein from Mycoplasma pneumoniae (strain ATCC 29342 / M129 / Subtype 1) (Mycoplasmoides pneumoniae).